A 427-amino-acid chain; its full sequence is Trigger factor (427 aa).

One can recognise a PPIase FKBP-type domain in the interval 163-248 (GDTVILDFEG…LHEIKTKEVP (86 aa)).

Belongs to the FKBP-type PPIase family. Tig subfamily.

It localises to the cytoplasm. The catalysed reaction is [protein]-peptidylproline (omega=180) = [protein]-peptidylproline (omega=0). In terms of biological role, involved in protein export. Acts as a chaperone by maintaining the newly synthesized protein in an open conformation. Functions as a peptidyl-prolyl cis-trans isomerase. This chain is Trigger factor, found in Listeria monocytogenes serotype 4b (strain CLIP80459).